A 625-amino-acid chain; its full sequence is Endoglucanase 13 (625 aa).

The signal sequence occupies residues 1 to 34 (MAATMNKTPATTFLLIPAAASLVLLLAAAASVEA). Residue Asp91 is the Nucleophile of the active site. His427 is a catalytic residue. A glycan (N-linked (GlcNAc...) asparagine) is linked at Asn440. Catalysis depends on residues Asp479 and Glu488. Residues 509–530 (ADNTPEYTPAPNAPSPSNGGSP) are disordered.

Belongs to the glycosyl hydrolase 9 (cellulase E) family.

The protein localises to the secreted. The catalysed reaction is Endohydrolysis of (1-&gt;4)-beta-D-glucosidic linkages in cellulose, lichenin and cereal beta-D-glucans.. The chain is Endoglucanase 13 (GLU6) from Oryza sativa subsp. indica (Rice).